The following is a 918-amino-acid chain: Non-lysosomal glucosylceramidase (918 aa).

A disordered region spans residues 886-918; sequence HKKSRRPSVTQGTGLSTQPECGPKRSLANLNSE. The segment covering 892–904 has biased composition (polar residues); that stretch reads PSVTQGTGLSTQP. S893 carries the phosphoserine modification.

This sequence belongs to the non-lysosomal glucosylceramidase family. Widely expressed at low level. Highly expressed in testis and brain. Ubiquitously expressed in the brain (at protein level). Expressed by Sertoli cells (at protein level).

Its subcellular location is the endoplasmic reticulum membrane. The protein localises to the golgi apparatus membrane. It catalyses the reaction a beta-D-glucosyl-(1&lt;-&gt;1')-N-acylsphing-4-enine + H2O = an N-acylsphing-4-enine + D-glucose. It carries out the reaction a beta-D-galactosyl-(1&lt;-&gt;1')-N-acylsphing-4-enine + H2O = an N-acylsphing-4-enine + D-galactose. The enzyme catalyses beta-D-glucosyl-(1-&gt;3)-O-lithocholate + H2O = lithocholate + D-glucose. The catalysed reaction is beta-D-glucosyl-(1-&gt;3)-O-chenodeoxycholate + H2O = chenodeoxycholate + D-glucose. It catalyses the reaction a di-trans,poly-cis-dolichyl beta-D-glucosyl phosphate + chenodeoxycholate = beta-D-glucosyl-(1-&gt;3)-O-chenodeoxycholate + a di-trans,poly-cis-dolichyl phosphate + H(+). It carries out the reaction octyl beta-D-glucose + chenodeoxycholate = beta-D-glucosyl-(1-&gt;3)-O-chenodeoxycholate + octan-1-ol. The enzyme catalyses cholesteryl 3-beta-D-glucoside + H2O = cholesterol + D-glucose. The catalysed reaction is a beta-D-glucosyl-(1&lt;-&gt;1')-N-acylsphing-4-enine + cholesterol = cholesteryl 3-beta-D-glucoside + an N-acylsphing-4-enine. It catalyses the reaction beta-D-glucosyl-N-(9Z-octadecenoyl)-sphing-4E-enine + cholesterol = N-(9Z-octadecenoyl)-sphing-4-enine + cholesteryl 3-beta-D-glucoside. It carries out the reaction a beta-D-galactosyl-(1&lt;-&gt;1')-N-acylsphing-4-enine + cholesterol = cholesteryl 3-beta-D-galactoside + an N-acylsphing-4-enine. The enzyme catalyses 1-(beta-D-galactosyl)-N-dodecanoylsphing-4-enine + cholesterol = cholesteryl 3-beta-D-galactoside + N-dodecanoylsphing-4-enine. It participates in lipid metabolism; sphingolipid metabolism. Its pathway is steroid metabolism; cholesterol metabolism. Enzymatic activity is dependent on membrane association and requires the presence of lipids. Inhibited by N-(adamantanemethyloxypentyl)-deoxynojirimycin/AMP-DNM. Inhibited by its product sphingosine/N-acylsphing-4-enine in a feedback loop. Also inhibited by other non-acetylated sphingoid bases and their derivatives but not by sphingosine-1-phosphate and complex sphingolipids. Functionally, non-lysosomal glucosylceramidase that catalyzes the hydrolysis of glucosylceramides/GlcCers (such as beta-D-glucosyl-(1&lt;-&gt;1')-N-acylsphing-4-enine) to free glucose and ceramides (such as N-acylsphing-4-enine). GlcCers are membrane glycosphingolipids that have a wide intracellular distribution. They are the main precursors of more complex glycosphingolipids that play a role in cellular growth, differentiation, adhesion, signaling, cytoskeletal dynamics and membrane properties. Also involved in the transglucosylation of cholesterol, transferring glucose from GlcCer, thereby modifying its water solubility and biological properties. Under specific conditions, may catalyze the reverse reaction, transferring glucose from cholesteryl-3-beta-D-glucoside to ceramide (such as N-acylsphing-4-enine). May play a role in the metabolism of bile acids. Able to hydrolyze bile acid 3-O-glucosides as well as to produce bile acid-glucose conjugates thanks to a bile acid glucosyl transferase activity. Catalyzes the hydrolysis of galactosylceramides/GalCers (such as beta-D-galactosyl-(1&lt;-&gt;1')-N-acylsphing-4-enine), as well as galactosyl transfer between GalCers and cholesterol in vitro with lower activity compared with their activity against GlcCers. The sequence is that of Non-lysosomal glucosylceramidase from Mus musculus (Mouse).